A 377-amino-acid chain; its full sequence is Cytochrome b (377 aa).

The next 4 helical transmembrane spans lie at 34–54 (FGFL…FLSM), 78–100 (WLLR…IHIA), 113–133 (TWMT…LGYV), and 179–199 (FFTL…IHLL). Positions 84 and 98 each coordinate heme b. Positions 183 and 197 each coordinate heme b. His-202 lines the a ubiquinone pocket. 4 helical membrane-spanning segments follow: residues 225 to 245 (FTIK…ILVL), 288 to 308 (KLGG…LPLY), 323 to 343 (MLFW…AQAI), and 352 to 372 (QILT…SVLW).

Belongs to the cytochrome b family. As to quaternary structure, the main subunits of complex b-c1 are: cytochrome b, cytochrome c1 and the Rieske protein. Heme b serves as cofactor.

The protein localises to the mitochondrion inner membrane. In terms of biological role, component of the ubiquinol-cytochrome c reductase complex (complex III or cytochrome b-c1 complex) that is part of the mitochondrial respiratory chain. The b-c1 complex mediates electron transfer from ubiquinol to cytochrome c. Contributes to the generation of a proton gradient across the mitochondrial membrane that is then used for ATP synthesis. This chain is Cytochrome b (mt:Cyt-b), found in Priapulus caudatus (Priapulid worm).